The following is a 288-amino-acid chain: Polyamine aminopropyltransferase (288 aa).

In terms of domain architecture, PABS spans 9–238; it reads ETLHDQFGQY…GIMTFAWATD (230 aa). Glutamine 33 serves as a coordination point for S-methyl-5'-thioadenosine. Spermidine contacts are provided by histidine 64 and aspartate 88. S-methyl-5'-thioadenosine is bound by residues glutamate 108 and 140–141; that span reads DG. Aspartate 158 serves as the catalytic Proton acceptor. Spermidine is bound at residue 158 to 161; that stretch reads DCTD. Proline 165 contacts S-methyl-5'-thioadenosine.

It belongs to the spermidine/spermine synthase family. In terms of assembly, homodimer or homotetramer.

It localises to the cytoplasm. The catalysed reaction is S-adenosyl 3-(methylsulfanyl)propylamine + putrescine = S-methyl-5'-thioadenosine + spermidine + H(+). The protein operates within amine and polyamine biosynthesis; spermidine biosynthesis; spermidine from putrescine: step 1/1. Catalyzes the irreversible transfer of a propylamine group from the amino donor S-adenosylmethioninamine (decarboxy-AdoMet) to putrescine (1,4-diaminobutane) to yield spermidine. In Shigella boydii serotype 18 (strain CDC 3083-94 / BS512), this protein is Polyamine aminopropyltransferase.